A 599-amino-acid chain; its full sequence is UvrABC system protein C (599 aa).

The 77-residue stretch at 19–95 (ESTGVYIFYD…IKKYRPIMNV (77 aa)) folds into the GIY-YIG domain. One can recognise a UVR domain in the interval 206-241 (EEIIEKLYDQMQEYSKNLEFEKAAKIRDKIRLLQNL).

Belongs to the UvrC family. In terms of assembly, interacts with UvrB in an incision complex.

It is found in the cytoplasm. The UvrABC repair system catalyzes the recognition and processing of DNA lesions. UvrC both incises the 5' and 3' sides of the lesion. The N-terminal half is responsible for the 3' incision and the C-terminal half is responsible for the 5' incision. This Dictyoglomus thermophilum (strain ATCC 35947 / DSM 3960 / H-6-12) protein is UvrABC system protein C.